A 143-amino-acid chain; its full sequence is Large ribosomal subunit protein uL11 (143 aa).

This sequence belongs to the universal ribosomal protein uL11 family. As to quaternary structure, part of the ribosomal stalk of the 50S ribosomal subunit. Interacts with L10 and the large rRNA to form the base of the stalk. L10 forms an elongated spine to which 2 L12 dimers bind in a sequential fashion forming a pentameric L10(L12)2(L12)2 complex. One or more lysine residues are methylated.

Forms part of the ribosomal stalk which helps the ribosome interact with GTP-bound translation factors. This chain is Large ribosomal subunit protein uL11, found in Agrobacterium fabrum (strain C58 / ATCC 33970) (Agrobacterium tumefaciens (strain C58)).